The chain runs to 283 residues: tRNA dimethylallyltransferase (283 aa).

The interval 5–8 is interaction with substrate tRNA; it reads DSML.

The protein belongs to the IPP transferase family. As to quaternary structure, monomer. The cofactor is Mg(2+).

It catalyses the reaction adenosine(37) in tRNA + dimethylallyl diphosphate = N(6)-dimethylallyladenosine(37) in tRNA + diphosphate. In terms of biological role, catalyzes the transfer of a dimethylallyl group onto the adenine at position 37 in tRNAs that read codons beginning with uridine, leading to the formation of N6-(dimethylallyl)adenosine (i(6)A). The chain is tRNA dimethylallyltransferase from Desulforamulus reducens (strain ATCC BAA-1160 / DSM 100696 / MI-1) (Desulfotomaculum reducens).